Consider the following 672-residue polypeptide: MTSIKNAELGWNEAGTPVSDQFDDVYFSNVNGLEETRYVFLKQNHLPERWQEFDQRRFVIGETGFGTGLNFLAVWQWFTEFRREYPEATLKELHFVSFEKYPLSKADLEKAHQSWPELAEFAEKLQQHYPAAVPECHRIVLEDGAITLDLWFGDIKDCMPLVPYAEQGLIDAWFLDGFAPSKNPEMWNQNLFNGMAKLAKQDCTVATFTAAGFVRRGLNEAGFAMKKVKGFGTKREMIAGSMEQREAHSNHLPWFNRTASTNHDSIAIIGGGIASAALAKTLVRRGQNVTLYCKDAQPAEGASGNRQGAVYPLLNGPHKGVSRVFAPGFLFARQFVDQAAQDIQFDHDWCGITQLMWDDKSADKLEKMLAGNFTPELIHKLSSEETAEKIGLPIDMASVHYPLGGWLCPAELTRGLIAKLENTELFEAKFEHQVKSLDWDEARKLWTLKANGQSFEHSTVVVANGSEFQTLSQTADLPMGQVKGQVSHAPATETLSKLKTVLCYDGYMTPVNPNNQHLCIGASYDRSHLDYEFDEDAQKDNAEKLVKCLPNQTWTKEVDTSGNLSRQGIRCVSRDHLPFVGNVGDFETIKTQYADLQNQQEQDVEAIHQFPNLFCFLGLGSRGLSSAPLMAEVLASQICGDPLPLPVDVLTELHPSRMWVRKLRKGKAITEL.

Residues Met-1–Glu-243 are tRNA (mnm(5)s(2)U34)-methyltransferase. The segment at Ile-269 to Leu-672 is FAD-dependent cmnm(5)s(2)U34 oxidoreductase.

In the N-terminal section; belongs to the methyltransferase superfamily. tRNA (mnm(5)s(2)U34)-methyltransferase family. It in the C-terminal section; belongs to the DAO family. The cofactor is FAD.

It localises to the cytoplasm. It catalyses the reaction 5-aminomethyl-2-thiouridine(34) in tRNA + S-adenosyl-L-methionine = 5-methylaminomethyl-2-thiouridine(34) in tRNA + S-adenosyl-L-homocysteine + H(+). Catalyzes the last two steps in the biosynthesis of 5-methylaminomethyl-2-thiouridine (mnm(5)s(2)U) at the wobble position (U34) in tRNA. Catalyzes the FAD-dependent demodification of cmnm(5)s(2)U34 to nm(5)s(2)U34, followed by the transfer of a methyl group from S-adenosyl-L-methionine to nm(5)s(2)U34, to form mnm(5)s(2)U34. The protein is tRNA 5-methylaminomethyl-2-thiouridine biosynthesis bifunctional protein MnmC of Vibrio campbellii (strain ATCC BAA-1116).